A 252-amino-acid polypeptide reads, in one-letter code: Small ribosomal subunit protein eS1A (252 aa).

Ala2 carries the post-translational modification N-acetylalanine; partial.

It belongs to the eukaryotic ribosomal protein eS1 family. As to quaternary structure, component of the small ribosomal subunit (SSU). Mature yeast ribosomes consist of a small (40S) and a large (60S) subunit. The 40S small subunit contains 1 molecule of ribosomal RNA (18S rRNA) and at least 33 different proteins. The large 60S subunit contains 3 rRNA molecules (25S, 5.8S and 5S rRNA) and at least 46 different proteins. eS1 interacts directly with uS11 and eS26, which form part of the mRNA exit tunnel.

It localises to the cytoplasm. Functionally, component of the ribosome, a large ribonucleoprotein complex responsible for the synthesis of proteins in the cell. The small ribosomal subunit (SSU) binds messenger RNAs (mRNAs) and translates the encoded message by selecting cognate aminoacyl-transfer RNA (tRNA) molecules. The large subunit (LSU) contains the ribosomal catalytic site termed the peptidyl transferase center (PTC), which catalyzes the formation of peptide bonds, thereby polymerizing the amino acids delivered by tRNAs into a polypeptide chain. The nascent polypeptides leave the ribosome through a tunnel in the LSU and interact with protein factors that function in enzymatic processing, targeting, and the membrane insertion of nascent chains at the exit of the ribosomal tunnel. This Schizosaccharomyces pombe (strain 972 / ATCC 24843) (Fission yeast) protein is Small ribosomal subunit protein eS1A (rps101).